Here is a 401-residue protein sequence, read N- to C-terminus: Protein IQ-DOMAIN 24 (401 aa).

The disordered stretch occupies residues 1-48 (MGFFGRLFGSKKQEKATPNRRRWSFATRSSHPENDSSSHSSKRRGDED). A calmodulin-binding region spans residues 105–121 (EYKAAMKIQSAFRGYLA). IQ domains follow at residues 105–133 (EYKA…ALVK) and 134–156 (LQAL…RMQT). 2 stretches are compositionally biased toward low complexity: residues 165–176 (RASRSSHVSDSS) and 278–287 (RSRTGSSSGG). Disordered regions lie at residues 165–186 (RASR…IPSS) and 258–296 (SPRK…PFTP).

This sequence belongs to the IQD family. As to quaternary structure, binds to multiple calmodulin (CaM) in the presence of Ca(2+) and CaM-like proteins.

The protein localises to the nucleus. The protein resides in the nuclear body. It is found in the cell membrane. Its function is as follows. May be involved in cooperative interactions with calmodulins or calmodulin-like proteins. Recruits calmodulin proteins to microtubules, thus being a potential scaffold in cellular signaling and trafficking. May associate with nucleic acids and regulate gene expression at the transcriptional or post-transcriptional level. This Arabidopsis thaliana (Mouse-ear cress) protein is Protein IQ-DOMAIN 24.